A 681-amino-acid polypeptide reads, in one-letter code: Minichromosome maintenance domain-containing protein 2 (681 aa).

Phosphoserine is present on Ser-292. One can recognise an MCM domain in the interval 533-621 (KQFTTEDFEK…LIAALLFEIS (89 aa)).

Plays an important role in meiotic recombination and associated DNA double-strand break repair. This is Minichromosome maintenance domain-containing protein 2 (Mcmdc2) from Rattus norvegicus (Rat).